Consider the following 293-residue polypeptide: Ribosomal protein L11 methyltransferase (293 aa).

S-adenosyl-L-methionine contacts are provided by threonine 145, glycine 166, aspartate 188, and asparagine 229.

This sequence belongs to the methyltransferase superfamily. PrmA family.

It localises to the cytoplasm. The enzyme catalyses L-lysyl-[protein] + 3 S-adenosyl-L-methionine = N(6),N(6),N(6)-trimethyl-L-lysyl-[protein] + 3 S-adenosyl-L-homocysteine + 3 H(+). Methylates ribosomal protein L11. In Halorhodospira halophila (strain DSM 244 / SL1) (Ectothiorhodospira halophila (strain DSM 244 / SL1)), this protein is Ribosomal protein L11 methyltransferase.